The sequence spans 346 residues: Probable choline kinase 3 (346 aa).

The ATP site is built by Arg71, Gln207, and Asp224.

Belongs to the choline/ethanolamine kinase family.

It carries out the reaction choline + ATP = phosphocholine + ADP + H(+). Its pathway is phospholipid metabolism; phosphatidylcholine biosynthesis; phosphocholine from choline: step 1/1. Functionally, involved in phospholipid biosynthesis. Catalyzes the first step in phosphatidylcholine biosynthesis. The chain is Probable choline kinase 3 from Arabidopsis thaliana (Mouse-ear cress).